Consider the following 208-residue polypeptide: Recombination protein RecR (208 aa).

The C4-type zinc finger occupies 57 to 72 (CALCNTLTEQEVCVTC). A Toprim domain is found at 80–187 (SKLCVVETPA…QVTRLARGVP (108 aa)).

Belongs to the RecR family.

May play a role in DNA repair. It seems to be involved in an RecBC-independent recombinational process of DNA repair. It may act with RecF and RecO. This Polaromonas naphthalenivorans (strain CJ2) protein is Recombination protein RecR.